We begin with the raw amino-acid sequence, 292 residues long: Cytidine deaminase (292 aa).

CMP/dCMP-type deaminase domains are found at residues 47-167 (TPLK…FGPK) and 186-292 (DHQD…YYSL). 88–90 (NQE) contacts substrate. Residue His101 participates in Zn(2+) binding. The Proton donor role is filled by Glu103. Residues Cys128 and Cys131 each contribute to the Zn(2+) site.

This sequence belongs to the cytidine and deoxycytidylate deaminase family. In terms of assembly, homodimer. Requires Zn(2+) as cofactor.

The catalysed reaction is cytidine + H2O + H(+) = uridine + NH4(+). The enzyme catalyses 2'-deoxycytidine + H2O + H(+) = 2'-deoxyuridine + NH4(+). In terms of biological role, this enzyme scavenges exogenous and endogenous cytidine and 2'-deoxycytidine for UMP synthesis. This is Cytidine deaminase from Haemophilus influenzae (strain PittEE).